Here is a 328-residue protein sequence, read N- to C-terminus: Malate dehydrogenase (328 aa).

12–18 (GAAGQIG) serves as a coordination point for NAD(+). Substrate-binding residues include Arg-95 and Arg-101. NAD(+)-binding positions include Asn-108, Gln-115, and 132–134 (VGN). Residues Asn-134 and Arg-165 each coordinate substrate. The active-site Proton acceptor is His-190.

It belongs to the LDH/MDH superfamily. MDH type 2 family.

The enzyme catalyses (S)-malate + NAD(+) = oxaloacetate + NADH + H(+). Its function is as follows. Catalyzes the reversible oxidation of malate to oxaloacetate. The protein is Malate dehydrogenase of Delftia acidovorans (strain DSM 14801 / SPH-1).